The chain runs to 578 residues: Zinc finger-containing ubiquitin peptidase 1 (578 aa).

The C2H2-type 1 zinc-finger motif lies at 2-24 (LSCDICGETVTSEPDMKAHLIVH). The C2H2-type 2; atypical zinc finger occupies 29–52 (IVCPFCKLSGVSYDEMCFHIETAH). C2H2-type zinc fingers lie at residues 154–177 (PECP…KTTH) and 193–215 (YDCP…VDLH). The segment at 226 to 248 (DRVQCSGDLQLAHQLQQEEDRKR) is MIU. The interval 249-274 (RSEESRQEIEEFQKLQRQYGLDNSGG) is zUBD/ZHA. An N6-acetyllysine modification is found at K262. Catalysis depends on C360, which acts as the Nucleophile. The Proton acceptor role is filled by H491. D512 is a catalytic residue.

Belongs to the peptidase C78 family. ZUFSP subfamily. In terms of assembly, interacts with RPA1 and RPA2.

The protein localises to the cytoplasm. The protein resides in the nucleus. It catalyses the reaction Thiol-dependent hydrolysis of ester, thioester, amide, peptide and isopeptide bonds formed by the C-terminal Gly of ubiquitin (a 76-residue protein attached to proteins as an intracellular targeting signal).. Its function is as follows. Deubiquitinase with endodeubiquitinase activity that specifically interacts with and cleaves 'Lys-63'-linked long polyubiquitin chains. Shows only weak activity against 'Lys-11' and 'Lys-48'-linked chains. Plays an important role in genome stability pathways, functioning to prevent spontaneous DNA damage and also promote cellular survival in response to exogenous DNA damage. Modulates the ubiquitination status of replication protein A (RPA) complex proteins in response to replication stress. In Macaca fascicularis (Crab-eating macaque), this protein is Zinc finger-containing ubiquitin peptidase 1.